A 172-amino-acid polypeptide reads, in one-letter code: Cytidylate kinase (172 aa).

4–12 (GPPGSGKST) is a binding site for ATP.

It belongs to the cytidylate kinase family. Type 2 subfamily.

It localises to the cytoplasm. The catalysed reaction is CMP + ATP = CDP + ADP. It catalyses the reaction dCMP + ATP = dCDP + ADP. This Aeropyrum pernix (strain ATCC 700893 / DSM 11879 / JCM 9820 / NBRC 100138 / K1) protein is Cytidylate kinase (cmk).